A 336-amino-acid polypeptide reads, in one-letter code: Ethanol acetyltransferase 1 (336 aa).

Residues 1 to 14 (MFPTRVLRSTLQKL) constitute a mitochondrion transit peptide. The region spanning 44-296 (PIVFLHGIFG…VNSSHDILDQ (253 aa)) is the AB hydrolase-1 domain. Residues Ser117, Asp141, and His291 each act as charge relay system in the active site.

Belongs to the AB hydrolase superfamily.

Its subcellular location is the mitochondrion. The catalysed reaction is ethanol + acetyl-CoA = ethyl acetate + CoA. The enzyme catalyses acetyl-CoA + H2O = acetate + CoA + H(+). It catalyses the reaction ethyl acetate + H2O = ethanol + acetate + H(+). Alcohol acetyltransferase that catalyzes the synthesis of ethyl acetate from ethanol and acetyl-CoA. Can also function as a thioesterase by hydrolyzing acetyl-CoA in the absence of ethanol, as well as esterase hydrolyzing ethyl acetate. This Cyberlindnera jadinii (strain ATCC 18201 / CBS 1600 / BCRC 20928 / JCM 3617 / NBRC 0987 / NRRL Y-1542) (Torula yeast) protein is Ethanol acetyltransferase 1 (EAT1).